Consider the following 286-residue polypeptide: ATP synthase gamma chain (286 aa).

Belongs to the ATPase gamma chain family. In terms of assembly, F-type ATPases have 2 components, CF(1) - the catalytic core - and CF(0) - the membrane proton channel. CF(1) has five subunits: alpha(3), beta(3), gamma(1), delta(1), epsilon(1). CF(0) has three main subunits: a, b and c.

Its subcellular location is the cell inner membrane. In terms of biological role, produces ATP from ADP in the presence of a proton gradient across the membrane. The gamma chain is believed to be important in regulating ATPase activity and the flow of protons through the CF(0) complex. In Flavobacterium psychrophilum (strain ATCC 49511 / DSM 21280 / CIP 103535 / JIP02/86), this protein is ATP synthase gamma chain.